The sequence spans 165 residues: Methylated-DNA--protein-cysteine methyltransferase, constitutive (165 aa).

Catalysis depends on C130, which acts as the Nucleophile; methyl group acceptor.

The protein belongs to the MGMT family.

Its subcellular location is the cytoplasm. The catalysed reaction is a 6-O-methyl-2'-deoxyguanosine in DNA + L-cysteinyl-[protein] = S-methyl-L-cysteinyl-[protein] + a 2'-deoxyguanosine in DNA. The enzyme catalyses a 4-O-methyl-thymidine in DNA + L-cysteinyl-[protein] = a thymidine in DNA + S-methyl-L-cysteinyl-[protein]. Its function is as follows. Involved in the cellular defense against the biological effects of O6-methylguanine (O6-MeG) and O4-methylthymine (O4-MeT) in DNA. Repairs the methylated nucleobase in DNA by stoichiometrically transferring the methyl group to a cysteine residue in the enzyme. This is a suicide reaction: the enzyme is irreversibly inactivated. The polypeptide is Methylated-DNA--protein-cysteine methyltransferase, constitutive (Bacillus subtilis (strain 168)).